The primary structure comprises 441 residues: Alpha-methylserine aldolase (441 aa).

Lys256 is subject to N6-(pyridoxal phosphate)lysine.

It belongs to the SHMT family. Alpha-methylserine aldolase subfamily. Homodimer. Pyridoxal 5'-phosphate serves as cofactor.

It catalyses the reaction 2-methyl-L-serine = formaldehyde + L-alanine. Functionally, catalyzes the reversible interconversion of alpha-methyl-L-serine to L-alanine and formaldehyde. In Variovorax paradoxus, this protein is Alpha-methylserine aldolase.